The primary structure comprises 404 residues: Argininosuccinate synthase (404 aa).

ATP is bound by residues Ala-10–Ser-18 and Ala-37. Positions 90 and 95 each coordinate L-citrulline. ATP is bound at residue Gly-120. L-aspartate contacts are provided by Thr-122, Asn-126, and Asp-127. Asn-126 contacts L-citrulline. L-citrulline-binding residues include Arg-130, Ser-181, Ser-190, Glu-266, and Tyr-278.

The protein belongs to the argininosuccinate synthase family. Type 1 subfamily. In terms of assembly, homotetramer.

Its subcellular location is the cytoplasm. It catalyses the reaction L-citrulline + L-aspartate + ATP = 2-(N(omega)-L-arginino)succinate + AMP + diphosphate + H(+). It participates in amino-acid biosynthesis; L-arginine biosynthesis; L-arginine from L-ornithine and carbamoyl phosphate: step 2/3. In Erythrobacter litoralis (strain HTCC2594), this protein is Argininosuccinate synthase.